Reading from the N-terminus, the 439-residue chain is Oocyte zinc finger protein XlCOF28 (439 aa).

9 C2H2-type zinc fingers span residues 6 to 28 (YECT…QRTH), 34 to 56 (FKCT…KKCH), 62 to 84 (YMCT…IRTH), 90 to 112 (FTCT…LRIH), 118 to 140 (HKCN…QRTH), 146 to 168 (FQCT…LRIH), 174 to 196 (YKCS…QRTH), 202 to 224 (FQCS…ERTH), and 230 to 252 (YKCS…QKTH). 2 disordered regions span residues 246–275 (KLHQ…APKT) and 285–304 (AGLE…ESPE). 4 consecutive C2H2-type zinc fingers follow at residues 333–355 (HKCT…QRTH), 361–383 (FKCS…RKIH), 389–411 (YTCA…RRTH), and 417–439 (YICA…QRIH).

The protein belongs to the krueppel C2H2-type zinc-finger protein family.

The protein resides in the nucleus. Its function is as follows. May be involved in transcriptional regulation. The sequence is that of Oocyte zinc finger protein XlCOF28 from Xenopus laevis (African clawed frog).